The sequence spans 160 residues: Cyclic pyranopterin monophosphate synthase (160 aa).

Substrate-binding positions include Met-77–His-79 and Met-114–Glu-115. Residue Asp-129 is part of the active site.

This sequence belongs to the MoaC family. In terms of assembly, homohexamer; trimer of dimers.

It carries out the reaction (8S)-3',8-cyclo-7,8-dihydroguanosine 5'-triphosphate = cyclic pyranopterin phosphate + diphosphate. It participates in cofactor biosynthesis; molybdopterin biosynthesis. Functionally, catalyzes the conversion of (8S)-3',8-cyclo-7,8-dihydroguanosine 5'-triphosphate to cyclic pyranopterin monophosphate (cPMP). The protein is Cyclic pyranopterin monophosphate synthase of Listeria monocytogenes serotype 4a (strain HCC23).